The primary structure comprises 478 residues: Cytochrome c-552 (478 aa).

Positions 1-26 (MARKTLRARRFFSLIFPFFFITSVYA) are cleaved as a signal peptide. Residue histidine 94 participates in heme c binding. Residues cysteine 122, cysteine 125, and lysine 126 each contribute to the heme site. Residues cysteine 160, cysteine 163, histidine 164, cysteine 209, cysteine 212, and histidine 213 each contribute to the heme c site. Ca(2+) is bound by residues glutamate 215, tyrosine 216, lysine 261, and glutamine 263. Position 216 (tyrosine 216) interacts with substrate. Histidine 264 is a substrate binding site. Heme c is bound by residues histidine 275, cysteine 282, cysteine 285, histidine 286, histidine 301, cysteine 314, cysteine 317, histidine 318, and histidine 393.

This sequence belongs to the cytochrome c-552 family. Ca(2+) serves as cofactor. The cofactor is heme c.

The protein resides in the periplasm. It carries out the reaction 6 Fe(III)-[cytochrome c] + NH4(+) + 2 H2O = 6 Fe(II)-[cytochrome c] + nitrite + 8 H(+). It participates in nitrogen metabolism; nitrate reduction (assimilation). Catalyzes the reduction of nitrite to ammonia, consuming six electrons in the process. The sequence is that of Cytochrome c-552 from Salmonella agona (strain SL483).